The chain runs to 217 residues: Probable transaldolase (217 aa).

The Schiff-base intermediate with substrate role is filled by Lys-83.

This sequence belongs to the transaldolase family. Type 3B subfamily.

It is found in the cytoplasm. The catalysed reaction is D-sedoheptulose 7-phosphate + D-glyceraldehyde 3-phosphate = D-erythrose 4-phosphate + beta-D-fructose 6-phosphate. It functions in the pathway carbohydrate degradation; pentose phosphate pathway; D-glyceraldehyde 3-phosphate and beta-D-fructose 6-phosphate from D-ribose 5-phosphate and D-xylulose 5-phosphate (non-oxidative stage): step 2/3. Functionally, transaldolase is important for the balance of metabolites in the pentose-phosphate pathway. This Clostridium botulinum (strain Hall / ATCC 3502 / NCTC 13319 / Type A) protein is Probable transaldolase.